Here is a 399-residue protein sequence, read N- to C-terminus: Stomatin-like protein 1 (399 aa).

The Tyrosine-type lysosomal sorting signal signature appears at Gly-6–Leu-10. Ser-28 carries the post-translational modification Phosphoserine. The chain crosses the membrane as a helical; Signal-anchor for type III membrane protein span at residues Leu-58–Ala-78. Topologically, residues Leu-79 to Lys-399 are cytoplasmic. Positions Lys-288 to Lys-399 constitute an SCP2 domain.

The protein belongs to the band 7/mec-2 family. In terms of assembly, interacts with STOM; may redistribute STOM from the plasma membrane to late endosomes. Expressed in dorsal root ganglion neurons.

It is found in the membrane. The protein resides in the cytoplasmic vesicle. It localises to the cell membrane. The protein localises to the late endosome membrane. Its subcellular location is the membrane raft. Its function is as follows. May play a role in cholesterol transfer to late endosomes. May play a role in modulating membrane acid-sensing ion channels. Can specifically inhibit proton-gated current of ASIC1 isoform 1. Can increase inactivation speed of ASIC3. May be involved in regulation of proton sensing in dorsal root ganglions. This Mus musculus (Mouse) protein is Stomatin-like protein 1 (Stoml1).